The chain runs to 59 residues: ATP synthase protein 8 (59 aa).

The chain crosses the membrane as a helical span at residues 7–23 (LSPPFLYFELIGHFQVE).

This sequence belongs to the ATPase protein 8 family. In terms of assembly, F-type ATPases have 2 components, CF(1) - the catalytic core - and CF(0) - the membrane proton channel.

The protein resides in the mitochondrion membrane. Mitochondrial membrane ATP synthase (F(1)F(0) ATP synthase or Complex V) produces ATP from ADP in the presence of a proton gradient across the membrane which is generated by electron transport complexes of the respiratory chain. F-type ATPases consist of two structural domains, F(1) - containing the extramembraneous catalytic core and F(0) - containing the membrane proton channel, linked together by a central stalk and a peripheral stalk. During catalysis, ATP synthesis in the catalytic domain of F(1) is coupled via a rotary mechanism of the central stalk subunits to proton translocation. Part of the complex F(0) domain. Minor subunit located with subunit a in the membrane. In Oenothera berteroana (Bertero's evening primrose), this protein is ATP synthase protein 8 (MT-ATP8).